Reading from the N-terminus, the 887-residue chain is Ubiquitin carboxyl-terminal hydrolase 4 (887 aa).

Residues Lys202–Lys328 enclose the Rhodanese domain. Disordered regions lie at residues Ala358–Pro465 and Gln484–Arg505. Positions Thr387–Val402 are enriched in polar residues. Residues Val525 to Ile885 enclose the USP domain. The active-site Nucleophile is the Cys534. The active-site Proton acceptor is the His842.

This sequence belongs to the peptidase C19 family.

It is found in the cytoplasm. The protein localises to the late endosome membrane. It carries out the reaction Thiol-dependent hydrolysis of ester, thioester, amide, peptide and isopeptide bonds formed by the C-terminal Gly of ubiquitin (a 76-residue protein attached to proteins as an intracellular targeting signal).. Its activity is regulated as follows. RFU1 is an inhibitor of deubiquitination activity. Functionally, ubiquitin thioesterase that acts at the late endosome/prevacuolar compartment to recover ubiquitin from ubiquitinated membrane proteins en route to the vacuole. Also removes ubiquitin from soluble proteins targeted to proteasomes. Is essential to maintain a normal level of free ubiquitin. Required for promoting coordination of DNA replication and avoids DNA overreplication. The sequence is that of Ubiquitin carboxyl-terminal hydrolase 4 (DOA4) from Candida glabrata (strain ATCC 2001 / BCRC 20586 / JCM 3761 / NBRC 0622 / NRRL Y-65 / CBS 138) (Yeast).